We begin with the raw amino-acid sequence, 435 residues long: Xylose isomerase (435 aa).

Active-site residues include His-99 and Asp-102. 7 residues coordinate Mg(2+): Glu-230, Glu-266, His-269, Asp-294, Asp-305, Asp-307, and Asp-337.

It belongs to the xylose isomerase family. Homotetramer. The cofactor is Mg(2+).

It localises to the cytoplasm. The enzyme catalyses alpha-D-xylose = alpha-D-xylulofuranose. The polypeptide is Xylose isomerase (Enterococcus faecalis (strain ATCC 700802 / V583)).